Here is a 789-residue protein sequence, read N- to C-terminus: 1-phosphatidylinositol 4,5-bisphosphate phosphodiesterase delta-3 (789 aa).

One can recognise a PH domain in the interval 63–172; the sequence is RAMLRGSRLR…WVRGLTKLRA (110 aa). The segment at 73–101 is substrate binding; that stretch reads KIRSRTWHKERLYRLQEDGLSVWFQRRIP. S105 carries the post-translational modification Phosphoserine. EF-hand domains lie at 182–217, 218–253, and 250–285; these read RLDHWIHSYLHRADSNQDSKMSFKEIKSLLRMVNVD, MNDMYAYLLFKECDHSNNDRLEGAEIEEFLRRLLKR, and LLKRPELEEIFHQYSGEDRVLSAPELLEFLEDQGEE. Residues D195, N197, D199, K201, E206, D231, S233, N235, R237, and E242 each coordinate Ca(2+). The PI-PLC X-box domain occupies 337–482; the sequence is QDMNQPLAHY…LKGRVLVKGK (146 aa). The active site involves H352. Ca(2+) is bound by residues N353, E382, and D384. The active site involves H397. E431 is a Ca(2+) binding site. Residues 461–519 are disordered; sequence SPNPEELPSPEQLKGRVLVKGKKLPAARSEDGRALSDREEEEEDDEEEEEEVEAAAQRR. Residues K480 and K482 each coordinate substrate. Positions 488–497 are enriched in basic and acidic residues; sequence RSEDGRALSD. S496 bears the Phosphoserine mark. The span at 498-513 shows a compositional bias: acidic residues; sequence REEEEEDDEEEEEEVE. The 117-residue stretch at 528-644 folds into the PI-PLC Y-box domain; the sequence is LSALAVYCHA…GYVLKPACLR (117 aa). S557 contributes to the substrate binding site. A Phosphoserine modification is found at S573. R584 lines the substrate pocket. The region spanning 644–769 is the C2 domain; it reads RQPDSTFDPE…QGYRHIHLLS (126 aa). The Ca(2+) site is built by I683, D685, N709, D738, Y739, and D740.

Ca(2+) is required as a cofactor. Present in corneal epithelial cells (at protein level).

It localises to the membrane. Its subcellular location is the cytoplasm. It is found in the cleavage furrow. It catalyses the reaction a 1,2-diacyl-sn-glycero-3-phospho-(1D-myo-inositol-4,5-bisphosphate) + H2O = 1D-myo-inositol 1,4,5-trisphosphate + a 1,2-diacyl-sn-glycerol + H(+). Strongly activated by phosphatidic acid. Inhibited by phosphatidylethanolamine (PtdEtn), phosphatidylcholine (PtdCho), sphingomyelin and phosphatidylserine (PtdSer). In terms of biological role, hydrolyzes the phosphatidylinositol 4,5-bisphosphate (PIP2) to generate 2 second messenger molecules diacylglycerol (DAG) and inositol 1,4,5-trisphosphate (IP3). DAG mediates the activation of protein kinase C (PKC), while IP3 releases Ca(2+) from intracellular stores. Essential for trophoblast and placental development. May participate in cytokinesis by hydrolyzing PIP2 at the cleavage furrow. Regulates neurite outgrowth through the inhibition of RhoA/Rho kinase signaling. The chain is 1-phosphatidylinositol 4,5-bisphosphate phosphodiesterase delta-3 from Homo sapiens (Human).